The sequence spans 303 residues: Ribonuclease HIII (303 aa).

Positions 85-302 constitute an RNase H type-2 domain; the sequence is CSLIGSDEVG…TKKAYQLLKK (218 aa). A divalent metal cation-binding residues include Asp-91, Glu-92, and Asp-196.

The protein belongs to the RNase HII family. RnhC subfamily. Mn(2+) serves as cofactor. The cofactor is Mg(2+).

The protein resides in the cytoplasm. It carries out the reaction Endonucleolytic cleavage to 5'-phosphomonoester.. Endonuclease that specifically degrades the RNA of RNA-DNA hybrids. This is Ribonuclease HIII from Streptococcus mutans serotype c (strain ATCC 700610 / UA159).